A 397-amino-acid polypeptide reads, in one-letter code: Cytochrome b (397 aa).

4 helical membrane passes run 38 to 58, 82 to 104, 119 to 139, and 185 to 205; these read FGSL…FLAM, WLLR…LHIF, VWCL…IGYV, and FFSL…LHLA. 2 residues coordinate heme b: histidine 88 and histidine 102. Positions 189 and 203 each coordinate heme b. Histidine 208 serves as a coordination point for a ubiquinone. 4 consecutive transmembrane segments (helical) span residues 231–251, 295–315, 327–347, and 354–373; these read FYVK…IWIF, AGGV…PFFK, IYQG…WIGC, and FVTI…AITP.

Belongs to the cytochrome b family. The main subunits of complex b-c1 are: cytochrome b, cytochrome c1 and the Rieske protein. Requires heme b as cofactor.

Its subcellular location is the mitochondrion inner membrane. In terms of biological role, component of the ubiquinol-cytochrome c reductase complex (complex III or cytochrome b-c1 complex) that is part of the mitochondrial respiratory chain. The b-c1 complex mediates electron transfer from ubiquinol to cytochrome c. Contributes to the generation of a proton gradient across the mitochondrial membrane that is then used for ATP synthesis. In Oryza sativa subsp. japonica (Rice), this protein is Cytochrome b (MT-CYB).